Consider the following 452-residue polypeptide: Enolase (452 aa).

Gln167 serves as a coordination point for (2R)-2-phosphoglycerate. The active-site Proton donor is Glu209. Mg(2+)-binding residues include Asp250, Glu307, and Asp334. The (2R)-2-phosphoglycerate site is built by Lys359, Arg388, Ser389, and Lys410. The active-site Proton acceptor is Lys359.

This sequence belongs to the enolase family. Mg(2+) is required as a cofactor.

It is found in the cytoplasm. The protein localises to the secreted. The protein resides in the cell surface. The catalysed reaction is (2R)-2-phosphoglycerate = phosphoenolpyruvate + H2O. It participates in carbohydrate degradation; glycolysis; pyruvate from D-glyceraldehyde 3-phosphate: step 4/5. Catalyzes the reversible conversion of 2-phosphoglycerate (2-PG) into phosphoenolpyruvate (PEP). It is essential for the degradation of carbohydrates via glycolysis. This Mesomycoplasma hyopneumoniae (strain 7448) (Mycoplasma hyopneumoniae) protein is Enolase.